We begin with the raw amino-acid sequence, 128 residues long: Glycine cleavage system H protein (128 aa).

The Lipoyl-binding domain maps to 24 to 106; it reads LVRIGISEFA…HGEGWLLIIR (83 aa). Lys65 bears the N6-lipoyllysine mark.

It belongs to the GcvH family. As to quaternary structure, the glycine cleavage system is composed of four proteins: P, T, L and H. Requires (R)-lipoate as cofactor.

Its function is as follows. The glycine cleavage system catalyzes the degradation of glycine. The H protein shuttles the methylamine group of glycine from the P protein to the T protein. The polypeptide is Glycine cleavage system H protein (Prochlorococcus marinus (strain NATL2A)).